Reading from the N-terminus, the 529-residue chain is Bifunctional purine biosynthesis protein PurH (529 aa).

One can recognise an MGS-like domain in the interval 1–148 (MQQRRPVRRA…KNHKDVAIVV (148 aa)). Lys287 is modified (N6-acetyllysine).

Belongs to the PurH family.

It catalyses the reaction (6R)-10-formyltetrahydrofolate + 5-amino-1-(5-phospho-beta-D-ribosyl)imidazole-4-carboxamide = 5-formamido-1-(5-phospho-D-ribosyl)imidazole-4-carboxamide + (6S)-5,6,7,8-tetrahydrofolate. The catalysed reaction is IMP + H2O = 5-formamido-1-(5-phospho-D-ribosyl)imidazole-4-carboxamide. The protein operates within purine metabolism; IMP biosynthesis via de novo pathway; 5-formamido-1-(5-phospho-D-ribosyl)imidazole-4-carboxamide from 5-amino-1-(5-phospho-D-ribosyl)imidazole-4-carboxamide (10-formyl THF route): step 1/1. It functions in the pathway purine metabolism; IMP biosynthesis via de novo pathway; IMP from 5-formamido-1-(5-phospho-D-ribosyl)imidazole-4-carboxamide: step 1/1. The protein is Bifunctional purine biosynthesis protein PurH of Escherichia coli O7:K1 (strain IAI39 / ExPEC).